The sequence spans 146 residues: Hemoglobin subunit beta (146 aa).

Residues H2–H146 enclose the Globin domain. H63 and H92 together coordinate heme b.

It belongs to the globin family. Heterotetramer of two alpha chains and two beta chains. In terms of tissue distribution, red blood cells.

Involved in oxygen transport from the lung to the various peripheral tissues. The protein is Hemoglobin subunit beta (HBB) of Psittacula krameri (Rose-ringed parakeet).